We begin with the raw amino-acid sequence, 311 residues long: Pyrimidine-specific ribonucleoside hydrolase RihA (311 aa).

Residue His240 is part of the active site.

It belongs to the IUNH family. RihA subfamily.

Its function is as follows. Hydrolyzes cytidine or uridine to ribose and cytosine or uracil, respectively. This chain is Pyrimidine-specific ribonucleoside hydrolase RihA, found in Salmonella schwarzengrund (strain CVM19633).